The following is a 371-amino-acid chain: MAAAMSSSCCASSLRLIPFKRTLFSSIHYPAKTLLLRPLKPSEVPSFRRTIITFQKISTGIVPPPSASSSPSSYGDLQPIEELPPKLQEIVKLFQSVQEPKAKYEQLMFYGKNLTPLDSQFKTRENKVEGCVSQVWVRAFFDEERNVVYEADSDSVLTKGLAALLVKGLSGRPVPEILRITPDFAVLLGLQQSLSPSRNNGLLNMLKLMQKKALHLEVKGEEDSSSGESSESSFVSIPETKDEANVPEVDLESKPDLVEDLGTEKIDDSESGSNVVALGSRGMRIREKLEKELDPVELEVEDVSYQHAGHAAVRGSAGDDGETHFNLRIVSDAFQGKSLVKRHRLIYDLLQDELKSGLHALSIVAKTPAEV.

Residues M1–S66 constitute a chloroplast and mitochondrion transit peptide. The active-site Cysteine persulfide intermediate is C131. Position 131 is an S-glutathionyl cysteine (C131). The interval V218–V249 is disordered.

It belongs to the SufE family. In terms of assembly, heterotetramer with NFS2. Interacts with NFS2 and NIFS1. Interacts in vitro with GRXS14, GRXS15, GRXS16 and GRXS17, but not with GRXC5. Interacts in vivo only with GRXS14 and GRXS16. Post-translationally, glutathionylated. Glutathionylation strongly reduces the stimulation of NFS2 activity. In terms of tissue distribution, expressed in roots, leaves, stems and flowers.

Its subcellular location is the plastid. The protein resides in the chloroplast stroma. It localises to the mitochondrion. Its pathway is cofactor biosynthesis; iron-sulfur cluster biosynthesis. Its function is as follows. Participates in cysteine desulfurization mediated by NFS2 in chloroplast and NIFS1 in mitochondrion. Activates the cysteine desulfurase activity of NFS2. Cysteine desulfurization mobilizes sulfur from L-cysteine to yield L-alanine and supplies the inorganic sulfur for iron-sulfur (Fe-S) cluster formation. Glutaredoxins regulate SUFE1 activity by inducing its reduction and deglutathionylation. This is SufE-like protein 1, chloroplastic/mitochondrial from Arabidopsis thaliana (Mouse-ear cress).